The primary structure comprises 477 residues: MIKPRTPPGIMELLPREQIAFQRMLDVIRRNYERFGFLPVETPVFELSDVLLTKSGGETERQVYFVQSTGALANAAAAADEGAESGGLPELALRFDLTVPLARYVAEHEHELSFPFRRYQMQRVYRGERAQRGRFREFYQCDIDVIGKDALSIRYDAEVLAVIHAVFAELGIGDFKVQLNNRKLLRGFFESLGVAEGELQLAVLREVDKIDKRGAEYVRDTLTGEGFGIATAQVDKILAFVAVRSNGHADALAQLQALEASVGASATLGEGIAELREVLELVKALGVPETAYCLNFSIARGLDYYTGTVYETTLTDHPQIGSICSGGRYENLASHYTKSKLPGVGISIGLTRLFWQLREAGLIAGIAESSVHAMVALMDESRLDDALDIARRLRIGGINTEVQMEPKKVGKQFQYAARAGIRFVVLAGDDELARGVVAVKDLVREQQFDVARDELASTLQVELEQAKAMLVSGIAAN.

The protein belongs to the class-II aminoacyl-tRNA synthetase family. As to quaternary structure, homodimer.

It is found in the cytoplasm. The catalysed reaction is tRNA(His) + L-histidine + ATP = L-histidyl-tRNA(His) + AMP + diphosphate + H(+). This is Histidine--tRNA ligase from Xanthomonas campestris pv. campestris (strain 8004).